A 287-amino-acid polypeptide reads, in one-letter code: 4-diphosphocytidyl-2-C-methyl-D-erythritol kinase (287 aa).

The active site involves K14. 96–106 (PWGAGLGGGSS) contacts ATP. D138 is a catalytic residue.

Belongs to the GHMP kinase family. IspE subfamily.

It catalyses the reaction 4-CDP-2-C-methyl-D-erythritol + ATP = 4-CDP-2-C-methyl-D-erythritol 2-phosphate + ADP + H(+). It functions in the pathway isoprenoid biosynthesis; isopentenyl diphosphate biosynthesis via DXP pathway; isopentenyl diphosphate from 1-deoxy-D-xylulose 5-phosphate: step 3/6. Its function is as follows. Catalyzes the phosphorylation of the position 2 hydroxy group of 4-diphosphocytidyl-2C-methyl-D-erythritol. This chain is 4-diphosphocytidyl-2-C-methyl-D-erythritol kinase, found in Methylibium petroleiphilum (strain ATCC BAA-1232 / LMG 22953 / PM1).